Reading from the N-terminus, the 239-residue chain is Protein TrbH (239 aa).

Residues 208 to 228 (TVVSIICLLMWICLVYIHCGI) traverse the membrane as a helical segment.

The protein localises to the cell inner membrane. The sequence is that of Protein TrbH (trbH) from Escherichia coli (strain K12).